We begin with the raw amino-acid sequence, 200 residues long: Pyrrolidone-carboxylate peptidase (200 aa).

Active-site residues include Glu-78, Cys-141, and His-165.

It belongs to the peptidase C15 family. In terms of assembly, homotetramer.

The protein resides in the cytoplasm. It catalyses the reaction Release of an N-terminal pyroglutamyl group from a polypeptide, the second amino acid generally not being Pro.. Removes 5-oxoproline from various penultimate amino acid residues except L-proline. This is Pyrrolidone-carboxylate peptidase from Thermococcus onnurineus (strain NA1).